A 132-amino-acid polypeptide reads, in one-letter code: Cytochrome b5 (132 aa).

A Cytochrome b5 heme-binding domain is found at 2-78 (GKIFTLAEVA…LDEYYVGDID (77 aa)). Residues H37 and H61 each contribute to the heme site. The helical transmembrane segment at 104–124 (FVIKLLQFLVPLVILAGAIGI) threads the bilayer.

The protein belongs to the cytochrome b5 family.

The protein resides in the endoplasmic reticulum membrane. The protein localises to the microsome membrane. In terms of biological role, membrane bound hemoprotein which function as an electron carrier for several membrane bound oxygenases. This is Cytochrome b5 from Borago officinalis (Bourrache).